The sequence spans 161 residues: Ribonuclease P protein component (161 aa).

This sequence belongs to the RnpA family. Consists of a catalytic RNA component (M1 or rnpB) and a protein subunit.

It carries out the reaction Endonucleolytic cleavage of RNA, removing 5'-extranucleotides from tRNA precursor.. In terms of biological role, RNaseP catalyzes the removal of the 5'-leader sequence from pre-tRNA to produce the mature 5'-terminus. It can also cleave other RNA substrates such as 4.5S RNA. The protein component plays an auxiliary but essential role in vivo by binding to the 5'-leader sequence and broadening the substrate specificity of the ribozyme. This is Ribonuclease P protein component from Helicobacter pylori (strain J99 / ATCC 700824) (Campylobacter pylori J99).